Reading from the N-terminus, the 98-residue chain is NADH-ubiquinone oxidoreductase chain 4L (98 aa).

3 helical membrane-spanning segments follow: residues 1–21 (MTLI…GLLM), 29–49 (ALLC…LTIL), and 61–81 (IILL…LVMV).

The protein belongs to the complex I subunit 4L family. In terms of assembly, core subunit of respiratory chain NADH dehydrogenase (Complex I) which is composed of 45 different subunits.

The protein localises to the mitochondrion inner membrane. It catalyses the reaction a ubiquinone + NADH + 5 H(+)(in) = a ubiquinol + NAD(+) + 4 H(+)(out). Functionally, core subunit of the mitochondrial membrane respiratory chain NADH dehydrogenase (Complex I) which catalyzes electron transfer from NADH through the respiratory chain, using ubiquinone as an electron acceptor. Part of the enzyme membrane arm which is embedded in the lipid bilayer and involved in proton translocation. In Megaptera novaeangliae (Humpback whale), this protein is NADH-ubiquinone oxidoreductase chain 4L (MT-ND4L).